Consider the following 210-residue polypeptide: MRMRSDPHETTVPGERPAASYLDGQLLVAMPGMTDERFARSVIYLCAHSAEGAMGIIVNKPAADLNMPDLLVQLDIIRQDDAIRLPIRVGHMPVLMGGPVESSRGFVLHSPDFHIDQSTLLIDDGICLTATVEILRAIAAGTGPRDAVLALGYAGWQAGQLESEIQANGWLHCPADPDLIFNTALDAKYDRALRAIGIEPAMLSTSAGHA.

It belongs to the UPF0301 (AlgH) family.

The sequence is that of UPF0301 protein Mnod_6933 from Methylobacterium nodulans (strain LMG 21967 / CNCM I-2342 / ORS 2060).